We begin with the raw amino-acid sequence, 461 residues long: GTPase Der (461 aa).

EngA-type G domains lie at 3–167 (PQVI…GEKQ) and 190–371 (LKLA…AAWS). GTP contacts are provided by residues 9 to 16 (GRPNVGKS), 56 to 60 (DTAGW), 119 to 122 (NKAE), 196 to 203 (GRPNAGKS), 249 to 253 (DTAGM), and 314 to 317 (NKWD). Residues 372 to 456 (KRVPTAALNR…PIRLTLRSPK (85 aa)) enclose the KH-like domain.

The protein belongs to the TRAFAC class TrmE-Era-EngA-EngB-Septin-like GTPase superfamily. EngA (Der) GTPase family. Associates with the 50S ribosomal subunit.

Its function is as follows. GTPase that plays an essential role in the late steps of ribosome biogenesis. The protein is GTPase Der of Novosphingobium aromaticivorans (strain ATCC 700278 / DSM 12444 / CCUG 56034 / CIP 105152 / NBRC 16084 / F199).